The following is a 211-amino-acid chain: N-(5'-phosphoribosyl)anthranilate isomerase (211 aa).

This sequence belongs to the TrpF family.

The catalysed reaction is N-(5-phospho-beta-D-ribosyl)anthranilate = 1-(2-carboxyphenylamino)-1-deoxy-D-ribulose 5-phosphate. Its pathway is amino-acid biosynthesis; L-tryptophan biosynthesis; L-tryptophan from chorismate: step 3/5. The polypeptide is N-(5'-phosphoribosyl)anthranilate isomerase (Desulfovibrio desulfuricans (strain ATCC 27774 / DSM 6949 / MB)).